The following is a 748-amino-acid chain: Disintegrin and metalloproteinase domain-containing protein 10 (748 aa).

The first 19 residues, 1 to 19 (MVLLRVLILLLSWAAGMGG), serve as a signal peptide directing secretion. The propeptide occupies 20–213 (QYGNPLNKYI…NGPELLRKKR (194 aa)). The Extracellular portion of the chain corresponds to 20–672 (QYGNPLNKYI…SPELYENIAE (653 aa)). The Cysteine switch motif lies at 171–178 (GGCADHSV). A Zn(2+)-binding site is contributed by cysteine 173. The Peptidase M12B domain maps to 220-456 (NTCQLYIQTD…KRNNCFVESG (237 aa)). Disulfide bonds link cysteine 222/cysteine 313, cysteine 344/cysteine 451, cysteine 399/cysteine 435, cysteine 460/cysteine 495, cysteine 471/cysteine 484, cysteine 473/cysteine 479, cysteine 483/cysteine 515, cysteine 503/cysteine 511, cysteine 510/cysteine 536, cysteine 524/cysteine 543, cysteine 530/cysteine 562, cysteine 555/cysteine 567, cysteine 572/cysteine 598, cysteine 580/cysteine 607, cysteine 582/cysteine 597, cysteine 594/cysteine 639, and cysteine 632/cysteine 645. 2 N-linked (GlcNAc...) asparagine glycosylation sites follow: asparagine 267 and asparagine 278. Histidine 383 serves as a coordination point for Zn(2+). Glutamate 384 is an active-site residue. Residues histidine 387 and histidine 393 each coordinate Zn(2+). An N-linked (GlcNAc...) asparagine glycan is attached at asparagine 439. The Disintegrin domain occupies 457-551 (QPICGNGMVE…LCPASDPKPN (95 aa)). An N-linked (GlcNAc...) asparagine glycan is attached at asparagine 551. The chain crosses the membrane as a helical span at residues 673 to 693 (WIVAHWWAVLLMGIALIMLMA). The Cytoplasmic segment spans residues 694 to 748 (GFIKICSVHTPSSNPKLPPPKPLPGTLKRRRPPQPIQQPQRQRPRESYQMGHMRR). The interval 704–748 (PSSNPKLPPPKPLPGTLKRRRPPQPIQQPQRQRPRESYQMGHMRR) is disordered. The SH3-binding signature appears at 708–715 (PKLPPPKP). Threonine 719 bears the Phosphothreonine; by FAM20C mark. The short motif at 722 to 728 (RRRPPQP) is the SH3-binding element. Residues 734–748 (RQRPRESYQMGHMRR) are interaction with AP2A1, AP2A2 and AP2M1.

Forms a ternary EFNA5-EPHA3-ADAM10 complex mediating EFNA5 extracellular domain shedding by ADAM10 which regulates the EFNA5-EPHA3 complex internalization and function, the cleavage occurs in trans, with ADAM10 and its substrate being on the membranes of opposing cells. Interacts with the clathrin adapter AP2 complex subunits AP2A1, AP2A2, AP2B1, and AP2M1; this interaction facilitates ADAM10 endocytosis from the plasma membrane during long-term potentiation in hippocampal neurons. Forms a ternary complex composed of ADAM10, EPHA4 and CADH1; within the complex, ADAM10 cleaves CADH1 which disrupts adherens junctions. Interacts with EPHA2. Interacts with NGF in a divalent cation-dependent manner. Interacts with TSPAN14; the interaction promotes ADAM10 maturation and cell surface expression. Interacts with TSPAN5, TSPAN10, TSPAN14, TSPAN15, TSPAN17 and TSPAN33; these interactions regulate ADAM10 substrate specificity, endocytosis and turnover. Interacts (via extracellular domain) with TSPAN33 (via extracellular domain) and (via cytoplasmic domain) with AFDN; interaction with TSPAN33 allows the docking of ADAM10 to zonula adherens through a PDZ11-dependent interaction between TSPAN33 and PLEKHA7 while interaction with AFDN locks ADAM10 at zonula adherens. Interacts with DLG1; this interaction recruits ADAM10 to the cell membrane during long-term depression in hippocampal neurons. Interacts (via extracellular domain) with BACE1 (via extracellular domain). Interacts with FAM171A1. In terms of assembly, (Microbial infection) Interacts with S.aureus hly; this interaction is necessary for toxin pore formation, disruption of focal adhesions and S.aureus hly-mediated cytotoxicity. It depends on Zn(2+) as a cofactor. Post-translationally, the precursor is cleaved by furin and PCSK7. In terms of tissue distribution, expressed in the brain (at protein level). Expressed in spleen, lymph node, thymus, peripheral blood leukocyte, bone marrow, cartilage, chondrocytes and fetal liver.

The protein resides in the cell membrane. It localises to the golgi apparatus membrane. The protein localises to the cytoplasmic vesicle. Its subcellular location is the clathrin-coated vesicle. It is found in the cell projection. The protein resides in the axon. It localises to the dendrite. The protein localises to the cell junction. Its subcellular location is the adherens junction. It is found in the cytoplasm. The catalysed reaction is Endopeptidase of broad specificity.. Its activity is regulated as follows. Catalytically inactive when the propeptide is intact and associated with the mature enzyme. The disintegrin and cysteine-rich regions modulate access of substrates to exerts an inhibitory effect on the cleavage of ADAM10 substrates. Functionally, transmembrane metalloprotease which mediates the ectodomain shedding of a myriad of transmembrane proteins, including adhesion proteins, growth factor precursors and cytokines being essential for development and tissue homeostasis. Associates with six members of the tetraspanin superfamily TspanC8 which regulate its exit from the endoplasmic reticulum and its substrate selectivity. Cleaves the membrane-bound precursor of TNF-alpha at '76-Ala-|-Val-77' to its mature soluble form. Responsible for the proteolytical release of soluble JAM3 from endothelial cells surface. Responsible for the proteolytic release of several other cell-surface proteins, including heparin-binding epidermal growth-like factor, ephrin-A2, CD44, CDH2 and for constitutive and regulated alpha-secretase cleavage of amyloid precursor protein (APP). Contributes to the normal cleavage of the cellular prion protein. Involved in the cleavage of the adhesion molecule L1 at the cell surface and in released membrane vesicles, suggesting a vesicle-based protease activity. Also controls the proteolytic processing of Notch and mediates lateral inhibition during neurogenesis. Required for the development of type 1 transitional B cells into marginal zone B cells, probably by cleaving Notch. Responsible for the FasL ectodomain shedding and for the generation of the remnant ADAM10-processed FasL (FasL APL) transmembrane form. Also cleaves the ectodomain of the integral membrane proteins CORIN and ITM2B. Mediates the proteolytic cleavage of LAG3, leading to release the secreted form of LAG3. Mediates the proteolytic cleavage of IL6R and IL11RA, leading to the release of secreted forms of IL6R and IL11RA. Enhances the cleavage of CHL1 by BACE1. Cleaves NRCAM. Cleaves TREM2, resulting in shedding of the TREM2 ectodomain. Involved in the development and maturation of glomerular and coronary vasculature. During development of the cochlear organ of Corti, promotes pillar cell separation by forming a ternary complex with CADH1 and EPHA4 and cleaving CADH1 at adherens junctions. May regulate the EFNA5-EPHA3 signaling. Regulates leukocyte transmigration as a sheddase for the adherens junction protein VE-cadherin/CDH5 in endothelial cells. (Microbial infection) Promotes the cytotoxic activity of S.aureus hly by binding to the toxin at zonula adherens and promoting formation of toxin pores. The chain is Disintegrin and metalloproteinase domain-containing protein 10 from Homo sapiens (Human).